We begin with the raw amino-acid sequence, 216 residues long: MAGRGGAARPNGPAAGNKICQFKLVLLGESAVGKSSLVLRFVKGQFHEYQESTIGAAFLTQTVCLDDTTVKFEIWDTAGQERYHSLAPMYYRGAQAAIVVYDITNTDTFARAKNWVKELQRQASPNIVIALAGNKADLASKRAVEFQEAQAYADDNSLLFMETSAKTAMNVNEIFMAIAKKLPKNEPQNATGAPGRNRGVDLQENNPASRSQCCSN.

Ser-30, Ala-31, Gly-33, Lys-34, Ser-35, Ser-36, His-47, Glu-48, Thr-53, and Gly-79 together coordinate GTP. A Mg(2+)-binding site is contributed by Ser-35. 2 short sequence motifs (switch) span residues 45–57 (QFHEYQESTIGAA) and 78–94 (AGQERYHSLAPMYYRGA). Residue Thr-53 participates in Mg(2+) binding. At Ser-85 the chain carries Phosphoserine; by LRRK2. Residues Asn-134, Lys-135, Asp-137, Ala-165, and Lys-166 each coordinate GTP. The segment at 185 to 216 (NEPQNATGAPGRNRGVDLQENNPASRSQCCSN) is disordered. The segment covering 203 to 216 (QENNPASRSQCCSN) has biased composition (polar residues). Residues Cys-213 and Cys-214 are each lipidated (S-geranylgeranyl cysteine).

It belongs to the small GTPase superfamily. Rab family. As to quaternary structure, interacts with EEA1. Interacts with INCA1. Interacts with GDI1, GDI2, CHML and CHM; phosphorylation at Ser-85 disrupts this interaction. Mg(2+) is required as a cofactor. In terms of processing, phosphorylation of Ser-85 in the switch II region by LRRK2 prevents the association of RAB regulatory proteins, including CHM, CHML and RAB GDP dissociation inhibitors GDI1 and GDI2. Post-translationally, (Microbial infection) Glycosylated on arginine residues by S.typhimurium protein Ssek3.

It localises to the cell membrane. The protein resides in the early endosome membrane. It is found in the melanosome. The catalysed reaction is GTP + H2O = GDP + phosphate + H(+). With respect to regulation, regulated by guanine nucleotide exchange factors (GEFs) which promote the exchange of bound GDP for free GTP. Regulated by GTPase activating proteins (GAPs) which increase the GTP hydrolysis activity. Inhibited by GDP dissociation inhibitors (GDIs). Functionally, the small GTPases Rab are key regulators of intracellular membrane trafficking, from the formation of transport vesicles to their fusion with membranes. Rabs cycle between an inactive GDP-bound form and an active GTP-bound form that is able to recruit to membranes different sets of downstream effectors directly responsible for vesicle formation, movement, tethering and fusion. This chain is Ras-related protein Rab-5C, found in Homo sapiens (Human).